Reading from the N-terminus, the 200-residue chain is Oligoribonuclease (200 aa).

The Exonuclease domain occupies 5–169; that stretch reads MVWIDCEMTG…ADIRESIAEL (165 aa). Residue tyrosine 126 is part of the active site.

Belongs to the oligoribonuclease family.

Its subcellular location is the cytoplasm. In terms of biological role, 3'-to-5' exoribonuclease specific for small oligoribonucleotides. This is Oligoribonuclease from Streptomyces coelicolor (strain ATCC BAA-471 / A3(2) / M145).